We begin with the raw amino-acid sequence, 407 residues long: Protein ZNF365 (407 aa).

Phosphoserine is present on Ser16. The C2H2-type; degenerate zinc-finger motif lies at 26 to 51 (LRCPRCGDHTRFRSLSSLRAHLEFSH). Ser138 is modified (phosphoserine). Residues 169–297 (VEAVDRTIEK…QLEYYQSQQA (129 aa)) are a coiled coil. Thr175 bears the Phosphothreonine mark. The segment at 347-392 (LKKAKDDRASMQPAKAIHEQAESSRDLCRPPKKGELLGFGRKGNIR) is disordered. Residues 362–381 (AIHEQAESSRDLCRPPKKGE) show a composition bias toward basic and acidic residues. Ser369 carries the post-translational modification Phosphoserine.

In terms of assembly, homodimer. Interacts with NDE1 and NDEL1. Does not interact with TUBG1. Interacts with DISC1. Interacts with PARP1. Interacts with MCRS1. In terms of tissue distribution, isoform 1 is expressed in brain. Isoform 2 is expressed in placenta and at low level in lung and liver. Isoform 3 is expressed in kidney and pancreas. Isoform 1 is expressed exclusively in brain.

Its subcellular location is the cytoplasm. It is found in the cytoskeleton. The protein localises to the microtubule organizing center. It localises to the centrosome. In terms of biological role, involved in the regulation of neurogenesis. Negatively regulates neurite outgrowth. Involved in the morphogenesis of basket cells in the somatosensory cortex during embryogenesis. Involved in the positive regulation of oligodendrocyte differentiation during postnatal growth. Involved in dendritic arborization, morphogenesis of spine density dendrite, and establishment of postsynaptic dendrite density in cortical pyramidal neurons. Involved in homologous recombination (HR) repair pathway. Required for proper resolution of DNA double-strand breaks (DSBs) by HR. Is required for recovery of stalled replication forks, and directly contributes to genomic stability. Interacts with PARP1 and mediates MRE11-dependent DNA end resection during replication fork recovery. Contributes to genomic stability by preventing telomere dysfunction. This is Protein ZNF365 (ZNF365) from Homo sapiens (Human).